The sequence spans 436 residues: Prenyltransferase nscD (436 aa).

The protein belongs to the tryptophan dimethylallyltransferase family.

It participates in secondary metabolite biosynthesis. In terms of biological role, prenyltransferase; part of the gene cluster that mediates the biosynthesis of neosartoricin B, a prenylated anthracenone that probably exhibits T-cell antiproliferative activity, suggestive of a physiological role as an immunosuppressive agent. The non-reducing polyketide synthase nscA probably synthesizes and cyclizes the decaketide backbone. The hydrolase nscB then mediates the product release through hydrolysis followed by spontaneous decarboxylation. The prenyltransferase nscD catalyzes the addition of the dimethylallyl group to the aromatic C5. The FAD-dependent monooxygenase nscC is then responsible for the stereospecific hydroxylation at C2. Neosartoricin B can be converted into two additional compounds neosartoricins C and D. Neosartoricin C is a spirocyclic compound that is cyclized through the attack of C3 hydroxyl on C14, followed by dehydration. On the other hand, neosartoricin D is a further cyclized compound in which attack of C2 on C14 in neosartoricin C results in the formation of the acetal-containing dioxabicyclo-octanone ring. Both of these compounds are novel and possibly represent related metabolites of the gene cluster. The chain is Prenyltransferase nscD from Trichophyton rubrum (strain ATCC MYA-4607 / CBS 118892) (Athlete's foot fungus).